The primary structure comprises 72 residues: Large ribosomal subunit protein bL31 (72 aa).

Cys16, Cys18, Cys38, and Cys41 together coordinate Zn(2+).

It belongs to the bacterial ribosomal protein bL31 family. Type A subfamily. In terms of assembly, part of the 50S ribosomal subunit. Zn(2+) serves as cofactor.

In terms of biological role, binds the 23S rRNA. This is Large ribosomal subunit protein bL31 from Azoarcus sp. (strain BH72).